The following is a 527-amino-acid chain: UvrABC system protein C (527 aa).

The region spanning 9-87 (KNPGCYIYKN…IKKYSPKYNI (79 aa)) is the GIY-YIG domain. Positions 191–226 (DSLIHELKNEMNEKSKNLQFEEALLIREEINAIERL) constitute a UVR domain.

Belongs to the UvrC family. Interacts with UvrB in an incision complex.

The protein localises to the cytoplasm. Its function is as follows. The UvrABC repair system catalyzes the recognition and processing of DNA lesions. UvrC both incises the 5' and 3' sides of the lesion. The N-terminal half is responsible for the 3' incision and the C-terminal half is responsible for the 5' incision. The chain is UvrABC system protein C from Methanococcus maripaludis (strain DSM 14266 / JCM 13030 / NBRC 101832 / S2 / LL).